The sequence spans 616 residues: Dihydroxy-acid dehydratase (616 aa).

Position 81 (aspartate 81) interacts with Mg(2+). Residue cysteine 122 coordinates [2Fe-2S] cluster. The Mg(2+) site is built by aspartate 123 and lysine 124. Lysine 124 carries the post-translational modification N6-carboxylysine. [2Fe-2S] cluster is bound at residue cysteine 195. Glutamate 491 is a Mg(2+) binding site. The active-site Proton acceptor is serine 517.

This sequence belongs to the IlvD/Edd family. In terms of assembly, homodimer. Requires [2Fe-2S] cluster as cofactor. The cofactor is Mg(2+).

The enzyme catalyses (2R)-2,3-dihydroxy-3-methylbutanoate = 3-methyl-2-oxobutanoate + H2O. It carries out the reaction (2R,3R)-2,3-dihydroxy-3-methylpentanoate = (S)-3-methyl-2-oxopentanoate + H2O. The protein operates within amino-acid biosynthesis; L-isoleucine biosynthesis; L-isoleucine from 2-oxobutanoate: step 3/4. It participates in amino-acid biosynthesis; L-valine biosynthesis; L-valine from pyruvate: step 3/4. Functionally, functions in the biosynthesis of branched-chain amino acids. Catalyzes the dehydration of (2R,3R)-2,3-dihydroxy-3-methylpentanoate (2,3-dihydroxy-3-methylvalerate) into 2-oxo-3-methylpentanoate (2-oxo-3-methylvalerate) and of (2R)-2,3-dihydroxy-3-methylbutanoate (2,3-dihydroxyisovalerate) into 2-oxo-3-methylbutanoate (2-oxoisovalerate), the penultimate precursor to L-isoleucine and L-valine, respectively. This is Dihydroxy-acid dehydratase from Escherichia fergusonii (strain ATCC 35469 / DSM 13698 / CCUG 18766 / IAM 14443 / JCM 21226 / LMG 7866 / NBRC 102419 / NCTC 12128 / CDC 0568-73).